The sequence spans 498 residues: Na(+)/H(+) exchange regulatory cofactor NHE-RF4 (498 aa).

4 consecutive PDZ domains span residues 49–130 (FCLL…LAQH), 157–235 (LCHV…AGLE), 263–346 (CLNI…VDPE), and 394–475 (QCFL…GARN). Ser329 bears the Phosphoserine mark.

Interacts with the C-terminal region of GUCY2C. Interacts with C-terminal region of SLC9A3 and the interactions decrease in response to elevated calcium ion levels. Interacts with the C-terminal region of SLC34A1. Interacts with USP2 isoform 2. Interacts (via the third PDZ domain) with SLC26A3 (via PDZ-binding motif). This interaction leads to decreased expression of SLC26A3 on the cell membrane resulting in its reduced exchanger activity. Phosphorylation at Ser-329 negatively regulates its interaction with SLC26A3. Expressed in kidney and small intestine. Not detected in heart, brain, spleen, lung, liver, skeletal muscle or testis.

It localises to the cell membrane. It is found in the cytoplasm. In terms of biological role, acts as a regulatory protein that associates with GUCY2C and negatively modulates its heat-stable enterotoxin-mediated activation. Stimulates SLC9A3 activity in the presence of elevated calcium ions. This is Na(+)/H(+) exchange regulatory cofactor NHE-RF4 (Nherf4) from Mus musculus (Mouse).